We begin with the raw amino-acid sequence, 274 residues long: tRNA (guanine-N(7)-)-methyltransferase (274 aa).

The disordered stretch occupies residues 16–40 (ASASRGAATGSRGVAPAVPRGGAPA). S-adenosyl-L-methionine is bound by residues Glu106, Glu131, Asp158, and Asp181. The active site involves Asp181. Substrate is bound by residues Lys185, Asp217, and 252 to 255 (TKFE).

Belongs to the class I-like SAM-binding methyltransferase superfamily. TrmB family.

It catalyses the reaction guanosine(46) in tRNA + S-adenosyl-L-methionine = N(7)-methylguanosine(46) in tRNA + S-adenosyl-L-homocysteine. The protein operates within tRNA modification; N(7)-methylguanine-tRNA biosynthesis. Catalyzes the formation of N(7)-methylguanine at position 46 (m7G46) in tRNA. The protein is tRNA (guanine-N(7)-)-methyltransferase of Verminephrobacter eiseniae (strain EF01-2).